Reading from the N-terminus, the 645-residue chain is Putative galactocerebrosidase (645 aa).

The N-terminal stretch at 1–16 (MFSIFIKIILILPSIA) is a signal peptide. The substrate site is built by Thr-87 and Trp-128. N-linked (GlcNAc...) asparagine glycosylation is present at Asn-141. Asn-171 provides a ligand contact to substrate. Glu-172 acts as the Proton donor/acceptor in catalysis. Residues Asn-174 and Asn-193 are each glycosylated (N-linked (GlcNAc...) asparagine). The active-site Nucleophile is the Glu-248. Residues Cys-261 and Cys-365 are joined by a disulfide bond. 7 N-linked (GlcNAc...) asparagine glycosylation sites follow: Asn-274, Asn-395, Asn-411, Asn-532, Asn-616, Asn-620, and Asn-638.

It belongs to the glycosyl hydrolase 59 family.

The catalysed reaction is a beta-D-Gal-(1&lt;-&gt;1')-ceramide + H2O = an N-acyl-sphingoid base + D-galactose. It catalyses the reaction a beta-D-galactosyl-(1&lt;-&gt;1')-N-acylsphing-4-enine + H2O = an N-acylsphing-4-enine + D-galactose. Hydrolyzes the galactose ester bonds of galactosylceramide, galactosylsphingoid base, lactosylceramide, and monogalactosyldiglyceride. C.elegans contain specific sphingoid bases, which are unique or different in structure compared to the sphingoid bases found in other animals. Two examples of these distinctive compounds are: 15-methylhexadecasphinganine and 15-methylhexadecasphing-4-enine. This is Putative galactocerebrosidase from Caenorhabditis elegans.